The primary structure comprises 418 residues: D-amino acid dehydrogenase (418 aa).

FAD is bound at residue 3–17; sequence VLVLGAGVAGVSSAW.

Belongs to the DadA oxidoreductase family. FAD serves as cofactor.

The catalysed reaction is a D-alpha-amino acid + A + H2O = a 2-oxocarboxylate + AH2 + NH4(+). In terms of biological role, oxidative deamination of D-amino acids. This chain is D-amino acid dehydrogenase, found in Neisseria meningitidis serogroup A / serotype 4A (strain DSM 15465 / Z2491).